The following is a 310-amino-acid chain: Inorganic pyrophosphatase, mitochondrial (310 aa).

A mitochondrion-targeting transit peptide spans 1-30 (MNLLRMNALTSKARSIERLKQTLNILSIRN). Positions 152, 157, and 189 each coordinate Mg(2+).

This sequence belongs to the PPase family. As to quaternary structure, homodimer that binds non-covalently to a protein complex in the inner mitochondrial membrane. Mg(2+) is required as a cofactor.

It localises to the mitochondrion. The enzyme catalyses diphosphate + H2O = 2 phosphate + H(+). In terms of biological role, involved in energy production. Its activity is stimulated by uncouplers of ATP synthesis. The protein is Inorganic pyrophosphatase, mitochondrial (PPA2) of Saccharomyces cerevisiae (strain ATCC 204508 / S288c) (Baker's yeast).